A 319-amino-acid polypeptide reads, in one-letter code: Cytochrome f (319 aa).

Residues 1 to 35 (MQNKDACKSLSSWVSLSISLLVLTVPLIWPYNSTA) form the signal peptide. Phe-36, Cys-56, Cys-59, and His-60 together coordinate heme. The chain crosses the membrane as a helical span at residues 285–305 (IQGLLVFFASVILAQIFLVLK).

It belongs to the cytochrome f family. The 4 large subunits of the cytochrome b6-f complex are cytochrome b6, subunit IV (17 kDa polypeptide, petD), cytochrome f and the Rieske protein, while the 4 small subunits are PetG, PetL, PetM and PetN. The complex functions as a dimer. Requires heme as cofactor.

It is found in the plastid. The protein localises to the chloroplast thylakoid membrane. In terms of biological role, component of the cytochrome b6-f complex, which mediates electron transfer between photosystem II (PSII) and photosystem I (PSI), cyclic electron flow around PSI, and state transitions. The polypeptide is Cytochrome f (Staurastrum punctulatum (Green alga)).